We begin with the raw amino-acid sequence, 545 residues long: 2-oxo-Delta(3)-4,5,5-trimethylcyclopentenylacetyl-CoA monooxygenase (545 aa).

Residues T20, E39, 47 to 50 (TWYW), 59 to 60 (DT), Y65, and V112 each bind FAD. NADP(+) is bound at residue 57–59 (RLD). Residues 193 to 199 (TGATGVQ) and 216 to 217 (RT) contribute to the NADP(+) site. V446 lines the FAD pocket. W501 contributes to the NADP(+) binding site.

It belongs to the FAD-binding monooxygenase family. Homodimer. Requires FAD as cofactor.

It carries out the reaction [(1R)-2,2,3-trimethyl-5-oxocyclopent-3-enyl]acetyl-CoA + NADPH + O2 + H(+) = [(2R)-3,3,4-trimethyl-6-oxo-3,6-dihydro-1H-pyran-2-yl]acetyl-CoA + NADP(+) + H2O. Its pathway is terpene metabolism; (R)-camphor degradation. Its function is as follows. Involved in the degradation of (+)-camphor. Catalyzes the lactonization of 2-oxo-delta(3)-4,5, 5-trimethylcyclopentenylacetyl-CoA (OT-CoA), a key intermediate in the metabolism of camphor. 2-Oxocyclopentyl ethyl acetate is also a good substrate, as is 2-oxocyclohexyl ethyl acetate and methyl-substituted cyclohexanones, but free acid is a poor substrate. The chain is 2-oxo-Delta(3)-4,5,5-trimethylcyclopentenylacetyl-CoA monooxygenase (otemo) from Pseudomonas putida (Arthrobacter siderocapsulatus).